The primary structure comprises 482 residues: Glutamyl-tRNA(Gln) amidotransferase subunit A (482 aa).

Residues K74 and S149 each act as charge relay system in the active site. Residue S173 is the Acyl-ester intermediate of the active site.

The protein belongs to the amidase family. GatA subfamily. In terms of assembly, heterotrimer of A, B and C subunits.

The catalysed reaction is L-glutamyl-tRNA(Gln) + L-glutamine + ATP + H2O = L-glutaminyl-tRNA(Gln) + L-glutamate + ADP + phosphate + H(+). Allows the formation of correctly charged Gln-tRNA(Gln) through the transamidation of misacylated Glu-tRNA(Gln) in organisms which lack glutaminyl-tRNA synthetase. The reaction takes place in the presence of glutamine and ATP through an activated gamma-phospho-Glu-tRNA(Gln). This Prochlorococcus marinus (strain AS9601) protein is Glutamyl-tRNA(Gln) amidotransferase subunit A.